The following is a 338-amino-acid chain: Ketol-acid reductoisomerase (NADP(+)) (338 aa).

Residues 1 to 181 (MKVYYDKDCD…GGGRTGIIET (181 aa)) form the KARI N-terminal Rossmann domain. Residues 24-27 (YGSQ), arginine 47, serine 50, threonine 52, and 82-85 (DEFQ) contribute to the NADP(+) site. The active site involves histidine 107. Glycine 133 lines the NADP(+) pocket. The KARI C-terminal knotted domain maps to 182-327 (TFKDETETDL…EQLRAMMPWI (146 aa)). Residues aspartate 190, glutamate 194, glutamate 226, and glutamate 230 each contribute to the Mg(2+) site. Serine 251 is a binding site for substrate.

Belongs to the ketol-acid reductoisomerase family. It depends on Mg(2+) as a cofactor.

The catalysed reaction is (2R)-2,3-dihydroxy-3-methylbutanoate + NADP(+) = (2S)-2-acetolactate + NADPH + H(+). It carries out the reaction (2R,3R)-2,3-dihydroxy-3-methylpentanoate + NADP(+) = (S)-2-ethyl-2-hydroxy-3-oxobutanoate + NADPH + H(+). It functions in the pathway amino-acid biosynthesis; L-isoleucine biosynthesis; L-isoleucine from 2-oxobutanoate: step 2/4. The protein operates within amino-acid biosynthesis; L-valine biosynthesis; L-valine from pyruvate: step 2/4. In terms of biological role, involved in the biosynthesis of branched-chain amino acids (BCAA). Catalyzes an alkyl-migration followed by a ketol-acid reduction of (S)-2-acetolactate (S2AL) to yield (R)-2,3-dihydroxy-isovalerate. In the isomerase reaction, S2AL is rearranged via a Mg-dependent methyl migration to produce 3-hydroxy-3-methyl-2-ketobutyrate (HMKB). In the reductase reaction, this 2-ketoacid undergoes a metal-dependent reduction by NADPH to yield (R)-2,3-dihydroxy-isovalerate. The chain is Ketol-acid reductoisomerase (NADP(+)) from Ectopseudomonas mendocina (strain ymp) (Pseudomonas mendocina).